Reading from the N-terminus, the 256-residue chain is MNILITNDDGLTSNGIIAARNSVEDLGQTTLVAPLTQQSGVGHAITLMKPLRAIKTELSDKTYGYAVTGTPTDCVILAVKSIMDKKPDLIISGMNIGENLSRSITTSGTLGATFEAASFGIPAIAVSLQVNREDLKFRTGVNFIDYSHAESIVNKLAKKVIKHGMPEGVDILNLNIPANPDSDEIIQSNFADRMFSTDVEKRIDPYGHPYYWIVGDLIDDGIEGTDVHTLHILNQPAVTPISIDMDAQVNISKWLD.

4 residues coordinate a divalent metal cation: D8, D9, S39, and N95.

Belongs to the SurE nucleotidase family. A divalent metal cation serves as cofactor.

It localises to the cytoplasm. It carries out the reaction a ribonucleoside 5'-phosphate + H2O = a ribonucleoside + phosphate. Functionally, nucleotidase that shows phosphatase activity on nucleoside 5'-monophosphates. The chain is 5'-nucleotidase SurE from Methanosphaera stadtmanae (strain ATCC 43021 / DSM 3091 / JCM 11832 / MCB-3).